We begin with the raw amino-acid sequence, 125 residues long: Flagellar protein FliT (125 aa).

The segment at 1–50 (MDNKMDLLSAYQRILSLSEQMLNLAKNEKWDELVDMEITYLKAVEVISHS) is required for homodimerization. Positions 60–98 (LQQKMTNILQIILDNENEIKKLLQKRLDELSKLIKQASQ) are fliD binding.

Belongs to the FliT family. In terms of assembly, homodimer. Interacts with FliD and FlhC.

Its subcellular location is the cytoplasm. The protein resides in the cytosol. Functionally, dual-function protein that regulates the transcription of class 2 flagellar operons and that also acts as an export chaperone for the filament-capping protein FliD. As a transcriptional regulator, acts as an anti-FlhDC factor; it directly binds FlhC, thus inhibiting the binding of the FlhC/FlhD complex to class 2 promoters, resulting in decreased expression of class 2 flagellar operons. As a chaperone, effects FliD transition to the membrane by preventing its premature polymerization, and by directing it to the export apparatus. In Photorhabdus laumondii subsp. laumondii (strain DSM 15139 / CIP 105565 / TT01) (Photorhabdus luminescens subsp. laumondii), this protein is Flagellar protein FliT.